The primary structure comprises 286 residues: Orotidine 5'-phosphate decarboxylase (286 aa).

The active-site Proton donor is the K97.

Belongs to the OMP decarboxylase family. Type 2 subfamily.

The catalysed reaction is orotidine 5'-phosphate + H(+) = UMP + CO2. The protein operates within pyrimidine metabolism; UMP biosynthesis via de novo pathway; UMP from orotate: step 2/2. This chain is Orotidine 5'-phosphate decarboxylase (pyrF), found in Clostridium acetobutylicum (strain ATCC 824 / DSM 792 / JCM 1419 / IAM 19013 / LMG 5710 / NBRC 13948 / NRRL B-527 / VKM B-1787 / 2291 / W).